The chain runs to 464 residues: Asparagine--tRNA ligase (464 aa).

It belongs to the class-II aminoacyl-tRNA synthetase family. In terms of assembly, homodimer.

The protein resides in the cytoplasm. The enzyme catalyses tRNA(Asn) + L-asparagine + ATP = L-asparaginyl-tRNA(Asn) + AMP + diphosphate + H(+). This Azobacteroides pseudotrichonymphae genomovar. CFP2 protein is Asparagine--tRNA ligase.